The chain runs to 215 residues: Deoxyribose-phosphate aldolase (215 aa).

Aspartate 89 functions as the Proton donor/acceptor in the catalytic mechanism. Lysine 153 (schiff-base intermediate with acetaldehyde) is an active-site residue. Lysine 182 (proton donor/acceptor) is an active-site residue.

The protein belongs to the DeoC/FbaB aldolase family. DeoC type 1 subfamily.

The protein resides in the cytoplasm. It carries out the reaction 2-deoxy-D-ribose 5-phosphate = D-glyceraldehyde 3-phosphate + acetaldehyde. It functions in the pathway carbohydrate degradation; 2-deoxy-D-ribose 1-phosphate degradation; D-glyceraldehyde 3-phosphate and acetaldehyde from 2-deoxy-alpha-D-ribose 1-phosphate: step 2/2. Catalyzes a reversible aldol reaction between acetaldehyde and D-glyceraldehyde 3-phosphate to generate 2-deoxy-D-ribose 5-phosphate. The protein is Deoxyribose-phosphate aldolase of Lactiplantibacillus plantarum (strain ATCC BAA-793 / NCIMB 8826 / WCFS1) (Lactobacillus plantarum).